The following is a 119-amino-acid chain: Ribonuclease P protein component (119 aa).

It belongs to the RnpA family. In terms of assembly, consists of a catalytic RNA component (M1 or rnpB) and a protein subunit.

The catalysed reaction is Endonucleolytic cleavage of RNA, removing 5'-extranucleotides from tRNA precursor.. Its function is as follows. RNaseP catalyzes the removal of the 5'-leader sequence from pre-tRNA to produce the mature 5'-terminus. It can also cleave other RNA substrates such as 4.5S RNA. The protein component plays an auxiliary but essential role in vivo by binding to the 5'-leader sequence and broadening the substrate specificity of the ribozyme. This chain is Ribonuclease P protein component, found in Listeria monocytogenes serotype 4b (strain CLIP80459).